Consider the following 221-residue polypeptide: PKHD-type hydroxylase P9211_12561 (221 aa).

A Fe2OG dioxygenase domain is found at 80–174; the sequence is KVHGTMFTRS…RIVCVGWIQS (95 aa). 3 residues coordinate Fe cation: histidine 98, aspartate 100, and histidine 155. 2-oxoglutarate is bound at residue arginine 165.

Fe(2+) is required as a cofactor. The cofactor is L-ascorbate.

This is PKHD-type hydroxylase P9211_12561 from Prochlorococcus marinus (strain MIT 9211).